A 248-amino-acid chain; its full sequence is 2,3-bisphosphoglycerate-dependent phosphoglycerate mutase (248 aa).

Residues 8–15 (RHGESEWN), 21–22 (TG), Arg-60, 87–90 (ERHY), Lys-98, 114–115 (RR), and 183–184 (GN) contribute to the substrate site. Catalysis depends on His-9, which acts as the Tele-phosphohistidine intermediate. Glu-87 (proton donor/acceptor) is an active-site residue.

Belongs to the phosphoglycerate mutase family. BPG-dependent PGAM subfamily.

It catalyses the reaction (2R)-2-phosphoglycerate = (2R)-3-phosphoglycerate. The protein operates within carbohydrate degradation; glycolysis; pyruvate from D-glyceraldehyde 3-phosphate: step 3/5. Catalyzes the interconversion of 2-phosphoglycerate and 3-phosphoglycerate. This chain is 2,3-bisphosphoglycerate-dependent phosphoglycerate mutase, found in Borreliella burgdorferi (strain ATCC 35210 / DSM 4680 / CIP 102532 / B31) (Borrelia burgdorferi).